The sequence spans 150 residues: Arginine repressor (150 aa).

This sequence belongs to the ArgR family.

It localises to the cytoplasm. It functions in the pathway amino-acid biosynthesis; L-arginine biosynthesis [regulation]. Functionally, regulates arginine biosynthesis genes. The sequence is that of Arginine repressor from Ruminiclostridium cellulolyticum (strain ATCC 35319 / DSM 5812 / JCM 6584 / H10) (Clostridium cellulolyticum).